We begin with the raw amino-acid sequence, 320 residues long: Transcription factor MYB80 (320 aa).

2 HTH myb-type domains span residues 9–65 (KENV…RPDL) and 66–116 (KHGQ…KKKL). DNA-binding regions (H-T-H motif) lie at residues 37–61 (WRLI…TNYL) and 89–112 (WSLI…NTKL). The interval 257 to 283 (TAAAEEEERRKLKGEVVDQEEIGSEGG) is disordered. Residues 263–272 (EERRKLKGEV) are compositionally biased toward basic and acidic residues.

In terms of tissue distribution, expressed in the tapetum and middle layer of developing anthers. Expressed in trichomes.

The protein resides in the nucleus. In terms of biological role, transcription factor that binds to the DNA sequence 5'-CCAACC-3'. Regulates directly PME5, UND and GLOX1. Essential for tapetum development in anthers and microsporogenesis. Regulates the timing of tapetal programmed cell death (PCD) which is critical for pollen development. May act through the activation of UND, encoding an A1 aspartic protease. Required for anther development by regulating tapetum development, callose dissolution and exine formation. Acts upstream of A6 and FAR2/MS2, two genes required for pollen exine formation. Negatively regulates trichome endoreduplication and trichome branching. The protein is Transcription factor MYB80 of Arabidopsis thaliana (Mouse-ear cress).